The chain runs to 515 residues: ATP synthase subunit alpha (515 aa).

Position 169–176 (G169–T176) interacts with ATP.

It belongs to the ATPase alpha/beta chains family. F-type ATPases have 2 components, CF(1) - the catalytic core - and CF(0) - the membrane proton channel. CF(1) has five subunits: alpha(3), beta(3), gamma(1), delta(1), epsilon(1). CF(0) has three main subunits: a(1), b(2) and c(9-12). The alpha and beta chains form an alternating ring which encloses part of the gamma chain. CF(1) is attached to CF(0) by a central stalk formed by the gamma and epsilon chains, while a peripheral stalk is formed by the delta and b chains.

It localises to the cell inner membrane. It catalyses the reaction ATP + H2O + 4 H(+)(in) = ADP + phosphate + 5 H(+)(out). Functionally, produces ATP from ADP in the presence of a proton gradient across the membrane. The alpha chain is a regulatory subunit. The protein is ATP synthase subunit alpha of Neisseria gonorrhoeae (strain ATCC 700825 / FA 1090).